The primary structure comprises 88 residues: Alpha-conotoxin GVIIIB (88 aa).

The signal sequence occupies residues 1-20 (MMSKMGAMFVLLLLFTLASS). Residues 21–43 (QQEGDVQARKTRPKSDFYRALPR) constitute a propeptide that is removed on maturation. Residue threonine 87 is modified to Threonine amide.

It belongs to the conotoxin S superfamily. Post-translationally, contains 5 disulfide bonds. In terms of processing, the predominant peptide contains 2 hydroxyprolines, while 2 minor peptides contains 1 and 3 hydroxyprolines. Expressed by the venom duct.

It localises to the secreted. Its function is as follows. Alpha-conotoxins act on postsynaptic membranes, they bind to the nicotinic acetylcholine receptors (nAChR) and thus inhibit them. This toxin shows high activity on alpha-9-alpha-10 (CHRNA9-CHRNA10) (IC(50)=9.79 nM). It also shows weak activity on alpha-3-beta-2 (CHRNA3-CHRNB2) (IC(50)~1 uM), alpha-6/alpha-3-beta-2-beta-3 (CHRNA6/CHRNA3-CHRNB2-CHRNB3) (IC(50)~1 uM). The toxin binds to the same or overlapping binding sites than conotoxin RgIA (AC P0C1D0). The protein is Alpha-conotoxin GVIIIB of Conus geographus (Geography cone).